Consider the following 423-residue polypeptide: Histone acetyltransferase type B subunit 2 (423 aa).

WD repeat units lie at residues 138-174 (PHIEEVIRARYMPANSNIIATINGKGTISIFDRTLEE), 175-224 (SKAQ…KPKS), 228-268 (SHDD…EPVK), 271-311 (PTAS…SPLH), and 315-355 (GHQD…AEQS). The segment at 357 to 361 (DDADD) is interaction with the histone H4 N-terminus. The stretch at 372–412 (GHRSPVNEFSFNPQIPWLLASTEEDNVIQAWKVSMKLVNAS) is one WD 6 repeat.

The protein belongs to the WD repeat RBAP46/RBAP48/MSI1 family. Component of the HAT-B complex composed of at least HAT1 and HAT2. The HAT-B complex binds to histone H4 tail.

Its subcellular location is the cytoplasm. The protein resides in the nucleus. Regulatory subunit of the histone acetylase B (HAT-B) complex. The complex acetylates 'Lys-12' of histone H4 which is required for telomeric silencing. The protein is Histone acetyltransferase type B subunit 2 (HAT2) of Eremothecium gossypii (strain ATCC 10895 / CBS 109.51 / FGSC 9923 / NRRL Y-1056) (Yeast).